Reading from the N-terminus, the 529-residue chain is GMP synthase [glutamine-hydrolyzing] (529 aa).

In terms of domain architecture, Glutamine amidotransferase type-1 spans 3 to 204 (TVAIVDFGSQ…FLKIAGCTRD (202 aa)). The Nucleophile role is filled by C87. Residues H179 and E181 contribute to the active site. Residues 205-395 (WTMGSFLHTQ…LGLPSAILDR (191 aa)) enclose the GMPS ATP-PPase domain. 232 to 238 (SGGVDSS) lines the ATP pocket.

In terms of assembly, homodimer.

The catalysed reaction is XMP + L-glutamine + ATP + H2O = GMP + L-glutamate + AMP + diphosphate + 2 H(+). It functions in the pathway purine metabolism; GMP biosynthesis; GMP from XMP (L-Gln route): step 1/1. Functionally, catalyzes the synthesis of GMP from XMP. In Anaplasma marginale (strain St. Maries), this protein is GMP synthase [glutamine-hydrolyzing].